A 192-amino-acid chain; its full sequence is Dynein axonemal light chain 1 (192 aa).

LRR repeat units follow at residues 49–70 (NCERLSLSTNCIEKIANLNGLK), 71–92 (NLKILSLGRNNIKNLNGLEAVG), 94–115 (TLEELWISYNLIEKLKGIHVMK), and 116–137 (KLKVLYMSNNLVKEWGEFLKLA). In terms of domain architecture, LRRCT spans 150–192 (NPLEEKYSADGNWIEEATKRLPKLKKLDGNPVIKQEEETEGES).

Belongs to the dynein light chain LC1-type family. Interacts with DNAH5, a outer arm dynein heavy chain. Interacts with tubulin located within the A-tubule of the outer doublets in a ATP-independent manner.

It localises to the cytoplasm. Its subcellular location is the cytoskeleton. The protein localises to the cilium axoneme. Part of the multisubunit axonemal ATPase complexes that generate the force for cilia motility and govern beat frequency. Component of the outer arm dynein (ODA). May be involved in a mechanosensory feedback mechanism controlling ODA activity based on external conformational cues by tethering the outer arm dynein heavy chain (DNAH5) to the microtubule within the axoneme. This is Dynein axonemal light chain 1 (dnal1) from Danio rerio (Zebrafish).